The primary structure comprises 165 residues: Methyl-coenzyme M reductase II operon protein D (165 aa).

In terms of assembly, MCR is composed of three subunits: alpha, beta, and gamma. The function of protein D is not known.

In Methanothermus fervidus (strain ATCC 43054 / DSM 2088 / JCM 10308 / V24 S), this protein is Methyl-coenzyme M reductase II operon protein D (mrtD).